The chain runs to 61 residues: Large ribosomal subunit protein uL30 (61 aa).

It belongs to the universal ribosomal protein uL30 family. As to quaternary structure, part of the 50S ribosomal subunit.

The polypeptide is Large ribosomal subunit protein uL30 (Rubrobacter xylanophilus (strain DSM 9941 / JCM 11954 / NBRC 16129 / PRD-1)).